The chain runs to 22 residues: NADH dehydrogenase [ubiquinone] 1 alpha subcomplex subunit 9 (22 aa).

The disordered stretch occupies residues 1–22 (ASNLATGGAGPLIXKGTGGRSS).

It belongs to the complex I NDUFA9 subunit family. In terms of assembly, complex I is composed of about 45 different subunits. Requires FAD as cofactor.

Its subcellular location is the mitochondrion matrix. Functionally, accessory subunit of the mitochondrial membrane respiratory chain NADH dehydrogenase (Complex I), that is believed not to be involved in catalysis. Complex I functions in the transfer of electrons from NADH to the respiratory chain. The immediate electron acceptor for the enzyme is believed to be ubiquinone. This is NADH dehydrogenase [ubiquinone] 1 alpha subcomplex subunit 9 from Solanum tuberosum (Potato).